Here is a 123-residue protein sequence, read N- to C-terminus: Small ribosomal subunit protein uS12 (123 aa).

Asp-89 is subject to 3-methylthioaspartic acid.

Belongs to the universal ribosomal protein uS12 family. As to quaternary structure, part of the 30S ribosomal subunit. Contacts proteins S8 and S17. May interact with IF1 in the 30S initiation complex.

Functionally, with S4 and S5 plays an important role in translational accuracy. Its function is as follows. Interacts with and stabilizes bases of the 16S rRNA that are involved in tRNA selection in the A site and with the mRNA backbone. Located at the interface of the 30S and 50S subunits, it traverses the body of the 30S subunit contacting proteins on the other side and probably holding the rRNA structure together. The combined cluster of proteins S8, S12 and S17 appears to hold together the shoulder and platform of the 30S subunit. The chain is Small ribosomal subunit protein uS12 from Maridesulfovibrio salexigens (strain ATCC 14822 / DSM 2638 / NCIMB 8403 / VKM B-1763) (Desulfovibrio salexigens).